A 230-amino-acid polypeptide reads, in one-letter code: Orotidine 5'-phosphate decarboxylase (230 aa).

Substrate contacts are provided by residues Asp9, Lys31, 58–67 (DLKFFDIPNT), Thr120, Arg180, Gln188, Gly208, and Arg209. Lys60 functions as the Proton donor in the catalytic mechanism.

Belongs to the OMP decarboxylase family. Type 1 subfamily. As to quaternary structure, homodimer.

The enzyme catalyses orotidine 5'-phosphate + H(+) = UMP + CO2. Its pathway is pyrimidine metabolism; UMP biosynthesis via de novo pathway; UMP from orotate: step 2/2. Its function is as follows. Catalyzes the decarboxylation of orotidine 5'-monophosphate (OMP) to uridine 5'-monophosphate (UMP). The sequence is that of Orotidine 5'-phosphate decarboxylase from Maridesulfovibrio salexigens (strain ATCC 14822 / DSM 2638 / NCIMB 8403 / VKM B-1763) (Desulfovibrio salexigens).